The primary structure comprises 155 residues: Biotin carboxyl carrier protein of acetyl-CoA carboxylase (155 aa).

One can recognise a Biotinyl-binding domain in the interval 72 to 155 (AASDELSGHL…EFDEPLIVIE (84 aa)). Lys-121 carries the post-translational modification N6-biotinyllysine.

In terms of assembly, homodimer.

The protein operates within lipid metabolism; fatty acid biosynthesis. In terms of biological role, this protein is a component of the acetyl coenzyme A carboxylase complex; first, biotin carboxylase catalyzes the carboxylation of the carrier protein and then the transcarboxylase transfers the carboxyl group to form malonyl-CoA. The polypeptide is Biotin carboxyl carrier protein of acetyl-CoA carboxylase (accB) (Haemophilus influenzae (strain ATCC 51907 / DSM 11121 / KW20 / Rd)).